Consider the following 805-residue polypeptide: DNA gyrase subunit B (805 aa).

Residues 435–550 (SEIFIVEGDS…RGYIYIAQPP (116 aa)) enclose the Toprim domain. E441, D515, and D517 together coordinate Mg(2+).

It belongs to the type II topoisomerase GyrB family. Heterotetramer, composed of two GyrA and two GyrB chains. In the heterotetramer, GyrA contains the active site tyrosine that forms a transient covalent intermediate with DNA, while GyrB binds cofactors and catalyzes ATP hydrolysis. Requires Mg(2+) as cofactor. Mn(2+) is required as a cofactor. Ca(2+) serves as cofactor.

It is found in the cytoplasm. The catalysed reaction is ATP-dependent breakage, passage and rejoining of double-stranded DNA.. Its function is as follows. A type II topoisomerase that negatively supercoils closed circular double-stranded (ds) DNA in an ATP-dependent manner to modulate DNA topology and maintain chromosomes in an underwound state. Negative supercoiling favors strand separation, and DNA replication, transcription, recombination and repair, all of which involve strand separation. Also able to catalyze the interconversion of other topological isomers of dsDNA rings, including catenanes and knotted rings. Type II topoisomerases break and join 2 DNA strands simultaneously in an ATP-dependent manner. In Caulobacter vibrioides (strain ATCC 19089 / CIP 103742 / CB 15) (Caulobacter crescentus), this protein is DNA gyrase subunit B.